The sequence spans 796 residues: Kinesin-like protein KIF3C (796 aa).

The Kinesin motor domain maps to alanine 10–isoleucine 367. Glycine 97–threonine 104 serves as a coordination point for ATP. Disordered regions lie at residues arginine 252–alanine 292, glutamate 397–glycine 422, and lysine 758–aspartate 796. A compositionally biased stretch (low complexity) spans alanine 256–threonine 269. Residues lysine 378–lysine 632 adopt a coiled-coil conformation. The span at methionine 401–alanine 416 shows a compositional bias: basic residues. A globular region spans residues tyrosine 633–valine 793.

Belongs to the TRAFAC class myosin-kinesin ATPase superfamily. Kinesin family. Kinesin II subfamily. Heterodimer of KIF3A and KIF3C.

The protein resides in the cytoplasm. It localises to the cytoskeleton. In terms of biological role, microtubule-based anterograde translocator for membranous organelles. The sequence is that of Kinesin-like protein KIF3C (Kif3c) from Mus musculus (Mouse).